The primary structure comprises 327 residues: 7,8-didemethyl-8-hydroxy-5-deazariboflavin synthase (327 aa).

The region spanning 6–244 (ITFSRNVFLP…EEVAVQVAPN (239 aa)) is the Radical SAM core domain. 3 residues coordinate [4Fe-4S] cluster: Cys20, Cys24, and Cys27.

This sequence belongs to the radical SAM superfamily. CofG family. In terms of assembly, consists of two subunits, CofG and CofH. [4Fe-4S] cluster is required as a cofactor.

It carries out the reaction 5-amino-5-(4-hydroxybenzyl)-6-(D-ribitylimino)-5,6-dihydrouracil + S-adenosyl-L-methionine = 7,8-didemethyl-8-hydroxy-5-deazariboflavin + 5'-deoxyadenosine + L-methionine + NH4(+) + H(+). It functions in the pathway cofactor biosynthesis; coenzyme F0 biosynthesis. Its function is as follows. Catalyzes the radical-mediated synthesis of 7,8-didemethyl-8-hydroxy-5-deazariboflavin from 5-amino-5-(4-hydroxybenzyl)-6-(D-ribitylimino)-5,6-dihydrouracil. This is 7,8-didemethyl-8-hydroxy-5-deazariboflavin synthase from Methanosphaerula palustris (strain ATCC BAA-1556 / DSM 19958 / E1-9c).